The sequence spans 335 residues: Cytoskeleton protein RodZ (335 aa).

The Cytoplasmic portion of the chain corresponds to 1-111 (MNTEATHDQN…LGKRRKKRDG (111 aa)). Residues 19–71 (LRNAREQLGLSQQAVAERLCLKVSTVRDIEEDKAPADLASTFLRGYIRSYARL) enclose the HTH cro/C1-type domain. Positions 30–49 (QQAVAERLCLKVSTVRDIEE) form a DNA-binding region, H-T-H motif. Residues 112–132 (WLMTFTWLVLFVVIGLSGAWW) form a helical; Signal-anchor for type II membrane protein membrane-spanning segment. Topologically, residues 133–335 (WQDHKAQQEE…TLNAEQSPAQ (203 aa)) are periplasmic. Positions 148–164 (DQSSAELNNNQSQSVPL) are enriched in polar residues. The segment at 148–244 (DQSSAELNNN…PLPTDQAGVT (97 aa)) is disordered. Low complexity-rich tracts occupy residues 165–205 (DTST…DPQQ) and 217–239 (DTAA…LPTD).

This sequence belongs to the RodZ family.

It is found in the cell inner membrane. Cytoskeletal protein that is involved in cell-shape control through regulation of the length of the long axis. In Escherichia coli O127:H6 (strain E2348/69 / EPEC), this protein is Cytoskeleton protein RodZ.